A 215-amino-acid polypeptide reads, in one-letter code: Cytochrome c biogenesis ATP-binding export protein CcmA (215 aa).

The 204-residue stretch at Leu-12–Pro-215 folds into the ABC transporter domain. Gly-44 to Thr-51 provides a ligand contact to ATP.

The protein belongs to the ABC transporter superfamily. CcmA exporter (TC 3.A.1.107) family. The complex is composed of two ATP-binding proteins (CcmA) and two transmembrane proteins (CcmB).

It localises to the cell inner membrane. It catalyses the reaction heme b(in) + ATP + H2O = heme b(out) + ADP + phosphate + H(+). Part of the ABC transporter complex CcmAB involved in the biogenesis of c-type cytochromes; once thought to export heme, this seems not to be the case, but its exact role is uncertain. Responsible for energy coupling to the transport system. The polypeptide is Cytochrome c biogenesis ATP-binding export protein CcmA (Xylella fastidiosa (strain Temecula1 / ATCC 700964)).